A 63-amino-acid chain; its full sequence is Large ribosomal subunit protein bL28 (63 aa).

This sequence belongs to the bacterial ribosomal protein bL28 family.

In Desulforudis audaxviator (strain MP104C), this protein is Large ribosomal subunit protein bL28.